Reading from the N-terminus, the 101-residue chain is A-type ATP synthase subunit F (101 aa).

Belongs to the V-ATPase F subunit family. In terms of assembly, has multiple subunits, A(3), B(3), C, D, E, F, G, I and K(x); there may be a few other subunits as well.

The protein localises to the cell membrane. Functionally, component of the A-type ATP synthase that produces ATP from ADP in the presence of a proton gradient across the membrane. This is A-type ATP synthase subunit F from Methanosarcina mazei (strain ATCC BAA-159 / DSM 3647 / Goe1 / Go1 / JCM 11833 / OCM 88) (Methanosarcina frisia).